The following is a 353-amino-acid chain: UPF0283 membrane protein YcjF (353 aa).

Transmembrane regions (helical) follow at residues 70-90 (MVMGGLALFGASVVGQGIQWT), 100-120 (VALGGCAAGALIIGAGVGSVV), and 213-233 (ESTLMIAVSPLALVDMAFIAW).

The protein belongs to the UPF0283 family.

The protein localises to the cell inner membrane. This is UPF0283 membrane protein YcjF from Shigella flexneri serotype 5b (strain 8401).